Here is a 640-residue protein sequence, read N- to C-terminus: tRNA uridine 5-carboxymethylaminomethyl modification enzyme MnmG (640 aa).

Residue 9 to 14 (GGGHAG) coordinates FAD. Residue 289–303 (GPRYCPSIEDKINKF) coordinates NAD(+).

This sequence belongs to the MnmG family. In terms of assembly, homodimer. Heterotetramer of two MnmE and two MnmG subunits. FAD serves as cofactor.

It localises to the cytoplasm. Its function is as follows. NAD-binding protein involved in the addition of a carboxymethylaminomethyl (cmnm) group at the wobble position (U34) of certain tRNAs, forming tRNA-cmnm(5)s(2)U34. This chain is tRNA uridine 5-carboxymethylaminomethyl modification enzyme MnmG, found in Campylobacter hominis (strain ATCC BAA-381 / DSM 21671 / CCUG 45161 / LMG 19568 / NCTC 13146 / CH001A).